The sequence spans 273 residues: Cilia- and flagella-associated protein 298-B (273 aa).

The protein belongs to the CFAP298 family.

It is found in the cytoplasm. Its subcellular location is the cytoskeleton. The protein localises to the cilium basal body. In terms of biological role, plays a role in motile cilium function, possibly by acting on outer dynein arm assembly. Seems to be important for initiation rather than maintenance of cilium motility. Required for correct positioning of the cilium at the apical cell surface, suggesting an additional role in the planar cell polarity (PCP) pathway. May suppress canonical Wnt signaling activity. The chain is Cilia- and flagella-associated protein 298-B (cfap298-b) from Xenopus laevis (African clawed frog).